The sequence spans 426 residues: DNA primase DnaG (426 aa).

Residues 165–241 (DEIIIVEGRA…DIDYVAKAPP (77 aa)) form the Toprim domain. The Mg(2+) site is built by Glu-171, Asp-215, and Asp-217. The segment at 278–298 (PAVEERPQPPQPQPPAVQPVQ) is disordered. Residues 285–294 (QPPQPQPPAV) are compositionally biased toward pro residues.

This sequence belongs to the archaeal DnaG primase family. In terms of assembly, forms a ternary complex with MCM helicase and DNA. Component of the archaeal exosome complex. Mg(2+) is required as a cofactor.

It catalyses the reaction ssDNA + n NTP = ssDNA/pppN(pN)n-1 hybrid + (n-1) diphosphate.. RNA polymerase that catalyzes the synthesis of short RNA molecules used as primers for DNA polymerase during DNA replication. Also part of the exosome, which is a complex involved in RNA degradation. Acts as a poly(A)-binding protein that enhances the interaction between heteromeric, adenine-rich transcripts and the exosome. The protein is DNA primase DnaG of Hyperthermus butylicus (strain DSM 5456 / JCM 9403 / PLM1-5).